The following is a 1771-amino-acid chain: Fatty acid synthase alpha subunit pkiB (1771 aa).

A compositionally biased stretch (polar residues) spans Ser-108–Pro-130. The disordered stretch occupies residues Ser-108 to Ala-133. One can recognise a Carrier domain in the interval Glu-143–Ile-221. At Ser-181 the chain carries O-(pantetheine 4'-phosphoryl)serine. A beta-ketoacyl reductase region spans residues His-575–Gly-771. The region spanning Lys-1011–Ser-1531 is the Ketosynthase family 3 (KS3) domain. Catalysis depends on for beta-ketoacyl synthase activity residues Cys-1197, His-1416, and His-1457. Mg(2+) is bound by residues Asp-1650, Val-1651, and Glu-1652. Acetyl-CoA-binding positions include Asp-1650–Glu-1652, Tyr-1676, Ser-1686, Glu-1695–Ser-1705, Glu-1719–Gly-1722, and Ile-1753–His-1755. Positions 1754 and 1755 each coordinate Mg(2+).

This sequence belongs to the thiolase-like superfamily. Fungal fatty acid synthetase subunit alpha family. [Alpha(6)beta(6)] hexamers of two multifunctional subunits (alpha and beta).

The catalysed reaction is acetyl-CoA + n malonyl-CoA + 2n NADPH + 4n H(+) = a long-chain-acyl-CoA + n CoA + n CO2 + 2n NADP(+).. The enzyme catalyses a fatty acyl-[ACP] + malonyl-[ACP] + H(+) = a 3-oxoacyl-[ACP] + holo-[ACP] + CO2. It catalyses the reaction a (3R)-hydroxyacyl-[ACP] + NADP(+) = a 3-oxoacyl-[ACP] + NADPH + H(+). The protein operates within secondary metabolite biosynthesis. In terms of biological role, fatty acid synthase alpha subunit; part of the pki gene cluster that mediates the biosynthesis of 2,4-dihydroxy-3-methyl-6-(2-oxoundecyl)benzaldehyde. The first step in the pathway is the generation of the decanoyl starter unit by the FAS composed of subunits pkiB and pkiC, which is then transferred directly from the FAS to the SAT domain of the non-reducing polyketide synthase pkiA. PkiA condenses the decanoyyl starter unit with 4 malonyl-CoA units and performs one methylation step to yield 2,4-dihydroxy-3-methyl-6-(2-oxoundecyl)benzaldehyde. This chain is Fatty acid synthase alpha subunit pkiB, found in Emericella nidulans (strain FGSC A4 / ATCC 38163 / CBS 112.46 / NRRL 194 / M139) (Aspergillus nidulans).